The following is a 337-amino-acid chain: Holliday junction branch migration complex subunit RuvB (337 aa).

A disordered region spans residues 1-22; it reads MEDERITSAEVQSPDEENEELS. Residues 1 to 184 form a large ATPase domain (RuvB-L) region; the sequence is MEDERITSAE…FGIVEHMNYY (184 aa). Residues leucine 23, arginine 24, glycine 65, lysine 68, threonine 69, threonine 70, 131-133, arginine 174, tyrosine 184, and arginine 221 each bind ATP; that span reads EDF. Threonine 69 provides a ligand contact to Mg(2+). A small ATPAse domain (RuvB-S) region spans residues 185–255; that stretch reads NEADLANIVR…LVSQSLKLLQ (71 aa). The segment at 258 to 337 is head domain (RuvB-H); sequence NRGLDRTDKK…LGLIDQYMNK (80 aa). 2 residues coordinate DNA: arginine 313 and arginine 318.

The protein belongs to the RuvB family. Homohexamer. Forms an RuvA(8)-RuvB(12)-Holliday junction (HJ) complex. HJ DNA is sandwiched between 2 RuvA tetramers; dsDNA enters through RuvA and exits via RuvB. An RuvB hexamer assembles on each DNA strand where it exits the tetramer. Each RuvB hexamer is contacted by two RuvA subunits (via domain III) on 2 adjacent RuvB subunits; this complex drives branch migration. In the full resolvosome a probable DNA-RuvA(4)-RuvB(12)-RuvC(2) complex forms which resolves the HJ.

It is found in the cytoplasm. The catalysed reaction is ATP + H2O = ADP + phosphate + H(+). In terms of biological role, the RuvA-RuvB-RuvC complex processes Holliday junction (HJ) DNA during genetic recombination and DNA repair, while the RuvA-RuvB complex plays an important role in the rescue of blocked DNA replication forks via replication fork reversal (RFR). RuvA specifically binds to HJ cruciform DNA, conferring on it an open structure. The RuvB hexamer acts as an ATP-dependent pump, pulling dsDNA into and through the RuvAB complex. RuvB forms 2 homohexamers on either side of HJ DNA bound by 1 or 2 RuvA tetramers; 4 subunits per hexamer contact DNA at a time. Coordinated motions by a converter formed by DNA-disengaged RuvB subunits stimulates ATP hydrolysis and nucleotide exchange. Immobilization of the converter enables RuvB to convert the ATP-contained energy into a lever motion, pulling 2 nucleotides of DNA out of the RuvA tetramer per ATP hydrolyzed, thus driving DNA branch migration. The RuvB motors rotate together with the DNA substrate, which together with the progressing nucleotide cycle form the mechanistic basis for DNA recombination by continuous HJ branch migration. Branch migration allows RuvC to scan DNA until it finds its consensus sequence, where it cleaves and resolves cruciform DNA. The sequence is that of Holliday junction branch migration complex subunit RuvB from Pediococcus pentosaceus (strain ATCC 25745 / CCUG 21536 / LMG 10740 / 183-1w).